The following is a 285-amino-acid chain: Bifunctional protein FolD (285 aa).

Residues 164-166, Ser-189, and Ile-230 each bind NADP(+); that span reads GRS.

This sequence belongs to the tetrahydrofolate dehydrogenase/cyclohydrolase family. Homodimer.

It catalyses the reaction (6R)-5,10-methylene-5,6,7,8-tetrahydrofolate + NADP(+) = (6R)-5,10-methenyltetrahydrofolate + NADPH. The enzyme catalyses (6R)-5,10-methenyltetrahydrofolate + H2O = (6R)-10-formyltetrahydrofolate + H(+). Its pathway is one-carbon metabolism; tetrahydrofolate interconversion. In terms of biological role, catalyzes the oxidation of 5,10-methylenetetrahydrofolate to 5,10-methenyltetrahydrofolate and then the hydrolysis of 5,10-methenyltetrahydrofolate to 10-formyltetrahydrofolate. The protein is Bifunctional protein FolD of Oceanobacillus iheyensis (strain DSM 14371 / CIP 107618 / JCM 11309 / KCTC 3954 / HTE831).